The sequence spans 406 residues: Argininosuccinate synthase (406 aa).

ATP is bound by residues 11–19 and Ala38; that span reads AYSGGLDTS. L-citrulline is bound by residues Tyr91 and Ser96. An ATP-binding site is contributed by Gly121. L-aspartate-binding residues include Thr123, Asn127, and Asp128. Residue Asn127 coordinates L-citrulline. Arg131, Ser182, Ser191, Glu267, and Tyr279 together coordinate L-citrulline.

This sequence belongs to the argininosuccinate synthase family. Type 1 subfamily. In terms of assembly, homotetramer.

Its subcellular location is the cytoplasm. The enzyme catalyses L-citrulline + L-aspartate + ATP = 2-(N(omega)-L-arginino)succinate + AMP + diphosphate + H(+). Its pathway is amino-acid biosynthesis; L-arginine biosynthesis; L-arginine from L-ornithine and carbamoyl phosphate: step 2/3. The sequence is that of Argininosuccinate synthase from Rhodospirillum centenum (strain ATCC 51521 / SW).